A 582-amino-acid chain; its full sequence is Vacuolar basic amino acid transporter 5 (582 aa).

At 1-44 the chain is on the cytoplasmic side; that stretch reads MEETKYSSQQEIEGACGSDASLNARGSNDSPMGLSLYLCLASLT. Residues 45–65 form a helical membrane-spanning segment; that stretch reads LVLFITALDILIVGTIIDVVA. The Vacuolar portion of the chain corresponds to 66–80; sequence EQFGNYSKTGWLVTG. An N-linked (GlcNAc...) asparagine glycan is attached at asparagine 70. The helical transmembrane segment at 81–101 threads the bilayer; the sequence is YSLPNAILSLIWGRFASIIGF. The Cytoplasmic segment spans residues 102–104; sequence QHS. Residues 105 to 125 traverse the membrane as a helical segment; sequence LILAILIFEAGSLIAALASSM. At 126-132 the chain is on the vacuolar side; it reads NMLIFGR. A helical transmembrane segment spans residues 133–153; that stretch reads VVAGVGGSGLQTLCFVIGCTM. Topologically, residues 154–160 are cytoplasmic; that stretch reads VGERSRP. A helical transmembrane segment spans residues 161–181; sequence LVISILSCAFAVAAIVGPIIG. The Vacuolar portion of the chain corresponds to 182 to 191; sequence GAFTTHVTWR. The helical transmembrane segment at 192-212 threads the bilayer; sequence WCFYINLPIGGLAIIMFLLTY. Residues 213–256 lie on the Cytoplasmic side of the membrane; that stretch reads KAENKGILQQIKDAIGTISSFTFSKFRHQVNFKRLMNGIIFKFD. Residues 257–277 form a helical membrane-spanning segment; it reads FFGFALCSAGLVLFLLGLTFG. Topologically, residues 278–287 are vacuolar; the sequence is GNKYSWNSGQ. A helical membrane pass occupies residues 288–308; that stretch reads VITYLVLGVLLFIFSLVYDFF. Over 309–329 the chain is Cytoplasmic; the sequence is LFDKFNPEPDNISYRPLLLRR. The helical transmembrane segment at 330–350 threads the bilayer; the sequence is LVAKPAIIIVNMVTFLLCTGY. Residues 351–372 are Vacuolar-facing; that stretch reads NGQMIYSVQFFQLIFASSAWKA. A helical membrane pass occupies residues 373-393; the sequence is GLHLIPIVITNVIAAIASGVI. Residues 394-401 are Cytoplasmic-facing; that stretch reads TKKLGLVK. The chain crosses the membrane as a helical span at residues 402-422; sequence PLLIFGGVLGVIGAGLMTLMT. A glycan (N-linked (GlcNAc...) asparagine) is linked at asparagine 423. Topologically, residues 423 to 430 are vacuolar; the sequence is NTSTKSTQ. The helical transmembrane segment at 431–451 threads the bilayer; the sequence is IGVLLLPGFSLGFALQASLMS. Topologically, residues 452 to 469 are cytoplasmic; that stretch reads AQLQITKDRPEAAMDFIE. Residues 470–492 traverse the membrane as a helical segment; sequence VTAFNTFMKSLGTTLGGVLSTTV. Over 493–539 the chain is Vacuolar; sequence FSASFHNKVSRAHLEPYEGKTVDDMILYRLQNYDGSHSTIGNILSDS. The helical transmembrane segment at 540–560 threads the bilayer; sequence IKNVFWMDLGFYALGFLFCSF. Residues 561–582 lie on the Cytoplasmic side of the membrane; sequence SSNKKLIIPKKDDTPEDNLEDK.

This sequence belongs to the major facilitator superfamily.

It localises to the vacuole membrane. Functionally, transporter required for vacuolar uptake of basic amino acids. This Saccharomyces cerevisiae (strain ATCC 204508 / S288c) (Baker's yeast) protein is Vacuolar basic amino acid transporter 5 (VBA5).